The following is a 606-amino-acid chain: Double-stranded RNA-binding protein Staufen homolog 2 (606 aa).

2 DRBM domains span residues 8–75 (TPMC…ESSL) and 95–181 (TPTV…ALKN). 2 disordered regions span residues 57–97 (SIKK…ITPT) and 177–205 (QALKNEPIPERPPQCSEEKKETEENSDAS). The span at 85 to 97 (ADSNSNPGSITPT) shows a compositional bias: polar residues. The segment covering 192–205 (SEEKKETEENSDAS) has biased composition (basic and acidic residues). 3 DRBM domains span residues 207–274 (SEIS…ELKK), 307–375 (NPIS…QLGY), and 493–557 (QPSQ…QLSE). Residues 580–606 (RLAERTESKPTNSGTTAQDCKDSKAVV) form a disordered region. Positions 588 to 597 (KPTNSGTTAQ) are enriched in polar residues.

Its function is as follows. RNA-binding protein required for the microtubule-dependent transport of RNAs within polarized cell types. This is Double-stranded RNA-binding protein Staufen homolog 2 (stau2) from Danio rerio (Zebrafish).